The primary structure comprises 188 residues: Peptidyl-tRNA hydrolase (188 aa).

Y17 is a binding site for tRNA. H22 (proton acceptor) is an active-site residue. TRNA is bound by residues Y65, N67, and N113.

This sequence belongs to the PTH family. As to quaternary structure, monomer.

It localises to the cytoplasm. The enzyme catalyses an N-acyl-L-alpha-aminoacyl-tRNA + H2O = an N-acyl-L-amino acid + a tRNA + H(+). Hydrolyzes ribosome-free peptidyl-tRNAs (with 1 or more amino acids incorporated), which drop off the ribosome during protein synthesis, or as a result of ribosome stalling. Functionally, catalyzes the release of premature peptidyl moieties from peptidyl-tRNA molecules trapped in stalled 50S ribosomal subunits, and thus maintains levels of free tRNAs and 50S ribosomes. In Mycoplasma pneumoniae (strain ATCC 29342 / M129 / Subtype 1) (Mycoplasmoides pneumoniae), this protein is Peptidyl-tRNA hydrolase.